A 165-amino-acid chain; its full sequence is Anterior gradient protein 3 (165 aa).

A signal peptide spans 1–20 (MLHSALALCLLLITVSSNLA). The Prevents secretion from ER signature appears at 162–165 (QSEL).

Belongs to the AGR family. Interacts with LYPD3 and DAG1 (alphaDAG1). Expressed in the ciliated cells of the airway epithelium. Not detected in the mucous cells.

The protein resides in the endoplasmic reticulum. Its subcellular location is the cytoplasm. Functionally, required for calcium-mediated regulation of ciliary beat frequency and mucociliary clearance in the airway. Might be involved in the regulation of intracellular calcium in tracheal epithelial cells. The chain is Anterior gradient protein 3 from Mus musculus (Mouse).